The chain runs to 166 residues: Putative pre-16S rRNA nuclease (166 aa).

This sequence belongs to the YqgF nuclease family.

It localises to the cytoplasm. Its function is as follows. Could be a nuclease involved in processing of the 5'-end of pre-16S rRNA. This is Putative pre-16S rRNA nuclease from Mesorhizobium japonicum (strain LMG 29417 / CECT 9101 / MAFF 303099) (Mesorhizobium loti (strain MAFF 303099)).